Here is a 62-residue protein sequence, read N- to C-terminus: Protein translocase subunit SecE (62 aa).

The chain crosses the membrane as a helical span at residues leucine 40 to isoleucine 60.

Belongs to the SecE/SEC61-gamma family. In terms of assembly, component of the Sec protein translocase complex. Heterotrimer consisting of SecY (alpha), SecG (beta) and SecE (gamma) subunits. The heterotrimers can form oligomers, although 1 heterotrimer is thought to be able to translocate proteins. Interacts with the ribosome. May interact with SecDF, and other proteins may be involved.

Its subcellular location is the cell membrane. Functionally, essential subunit of the Sec protein translocation channel SecYEG. Clamps together the 2 halves of SecY. May contact the channel plug during translocation. In Saccharolobus solfataricus (strain ATCC 35092 / DSM 1617 / JCM 11322 / P2) (Sulfolobus solfataricus), this protein is Protein translocase subunit SecE.